Here is an 821-residue protein sequence, read N- to C-terminus: G-type lectin S-receptor-like serine/threonine-protein kinase SD2-5 (821 aa).

A signal peptide spans 1 to 21 (MRGVFIVIVTCLVFLPDPLRA). Residues 22–429 (GVASIGSITP…NGEDDGKHFP (408 aa)) lie on the Extracellular side of the membrane. In terms of domain architecture, Bulb-type lectin spans 33-148 (FGGSQMNYIN…DGTSIWESFD (116 aa)). N-linked (GlcNAc...) asparagine glycans are attached at residues N51, N121, N174, and N248. Residues 280–314 (PSDLCGTPEPCGPYYVCSGSKVCGCVSGLSRARSD) form the EGF-like; atypical domain. 2 disulfide bridges follow: C284-C296 and C290-C302. The PAN domain occupies 323–411 (CKKTKDNATL…SGFVSYIKIA (89 aa)). N-linked (GlcNAc...) asparagine glycans are attached at residues N329, N370, and N380. 2 cysteine pairs are disulfide-bonded: C363-C385 and C367-C373. A helical transmembrane segment spans residues 430 to 450 (YVVIIVVVTVFIIAVLIFVAF). The Cytoplasmic portion of the chain corresponds to 451–821 (RIHKRKKMIL…LSAVRLSGPR (371 aa)). A Protein kinase domain is found at 493-768 (NNFSVKLGQG…KVVQMLEGVF (276 aa)). ATP-binding positions include 499–507 (LGQGGFGSV) and K521. Positions 581 to 599 (KDGDVLLDWDTRFNIALGT) are caM-binding. The active-site Proton acceptor is the D618. Position 635 is a phosphoserine (S635). The residue at position 652 (T652) is a Phosphothreonine.

Belongs to the protein kinase superfamily. Ser/Thr protein kinase family. In terms of assembly, interacts with PUB9, PUB13, PUB14 and PUB29.

It localises to the membrane. The catalysed reaction is L-seryl-[protein] + ATP = O-phospho-L-seryl-[protein] + ADP + H(+). It catalyses the reaction L-threonyl-[protein] + ATP = O-phospho-L-threonyl-[protein] + ADP + H(+). The protein is G-type lectin S-receptor-like serine/threonine-protein kinase SD2-5 (SD25) of Arabidopsis thaliana (Mouse-ear cress).